A 90-amino-acid polypeptide reads, in one-letter code: Large ribosomal subunit protein bL27 (90 aa).

Residues 1 to 21 are disordered; it reads MAHTKAGGTTRNSRDSAGRRL.

It belongs to the bacterial ribosomal protein bL27 family.

This Metamycoplasma arthritidis (strain 158L3-1) (Mycoplasma arthritidis) protein is Large ribosomal subunit protein bL27.